A 117-amino-acid polypeptide reads, in one-letter code: Holo-[acyl-carrier-protein] synthase (117 aa).

Positions 6 and 55 each coordinate Mg(2+).

Belongs to the P-Pant transferase superfamily. AcpS family. The cofactor is Mg(2+).

Its subcellular location is the cytoplasm. The enzyme catalyses apo-[ACP] + CoA = holo-[ACP] + adenosine 3',5'-bisphosphate + H(+). In terms of biological role, transfers the 4'-phosphopantetheine moiety from coenzyme A to a Ser of acyl-carrier-protein. The protein is Holo-[acyl-carrier-protein] synthase of Chlorobaculum tepidum (strain ATCC 49652 / DSM 12025 / NBRC 103806 / TLS) (Chlorobium tepidum).